Reading from the N-terminus, the 371-residue chain is Aminomethyltransferase (371 aa).

Belongs to the GcvT family. As to quaternary structure, the glycine cleavage system is composed of four proteins: P, T, L and H.

The enzyme catalyses N(6)-[(R)-S(8)-aminomethyldihydrolipoyl]-L-lysyl-[protein] + (6S)-5,6,7,8-tetrahydrofolate = N(6)-[(R)-dihydrolipoyl]-L-lysyl-[protein] + (6R)-5,10-methylene-5,6,7,8-tetrahydrofolate + NH4(+). Its function is as follows. The glycine cleavage system catalyzes the degradation of glycine. The sequence is that of Aminomethyltransferase from Pectobacterium carotovorum subsp. carotovorum (strain PC1).